The primary structure comprises 457 residues: Exoenzyme T (457 aa).

One can recognise a Bacterial Rho-GAP domain in the interval Leu-99–Lys-232. The 177-residue stretch at Asp-242–Glu-418 folds into the TR mART core domain. Residues Arg-322, Ser-346, and Glu-385 contribute to the active site.

Interacts with chaperone protein SpcS; this interaction maintains ExoT in a secretion competent state within the cytoplasm. Interacts with host YWHAB.

Its subcellular location is the secreted. It catalyses the reaction L-arginyl-[protein] + NAD(+) = N(omega)-(ADP-D-ribosyl)-L-arginyl-[protein] + nicotinamide + H(+). Functionally, bifunctional effector protein that is secreted and delivered by the type III secretion system into eukaryotic target cells. ADP-ribosylates several eukaryotic proteins including CT10 regulator of kinase (Crk) proteins. In turn, induces atypical anoikis apoptosis by transforming Crk adaptor protein into a cytotoxin. Affects host cell morphology by disrupting the actin cytoskeleton. In addition to this activity, acts via its N-terminal region as a GTPase-activating protein (GAP) for host Rho GTPases including RhoA, Rac1, Cdc42 and Ras. The bacterial Rho-GAP domain activity induces mitochondrial disruption in the target host cell by activating host caspases 3 and 9 that execute cellular death. This activity also causes stress fiber disassembly. The chain is Exoenzyme T (exoT) from Pseudomonas aeruginosa (strain ATCC 15692 / DSM 22644 / CIP 104116 / JCM 14847 / LMG 12228 / 1C / PRS 101 / PAO1).